A 785-amino-acid polypeptide reads, in one-letter code: Peptide transporter family 2 (785 aa).

The next 9 helical transmembrane spans lie at 46 to 66, 72 to 92, 99 to 119, 134 to 154, 167 to 187, 208 to 228, 303 to 323, 345 to 365, and 382 to 402; these read FSFYGMRAVLTLYFFNILNFS, VLFHAFTVICYSSPLLGSILA, FWTIFFISIFYACGQILLAFS, LLGLLIVGLGTGGIKPCVSAF, ISLFFSMFYFSINAGSLISMW, FGIPAILMIVATLVFMAGSFW, VIVMMIPVPMFWALYDQQGST, MGVLNAFLILFFIPIFQSIVY, and AGGGILTAVSFFVCGIVQLFV. Residue N467 is glycosylated (N-linked (GlcNAc...) asparagine). A run of 3 helical transmembrane segments spans residues 670–690, 711–731, and 738–758; these read ILWQIPQYVILTAGEVLFSIT, WLFTTAIGDLIVVVIFMLNIF, and MFVFGGIMLFVIFVFILLAVF.

It belongs to the major facilitator superfamily. Proton-dependent oligopeptide transporter (POT/PTR) (TC 2.A.17) family. In terms of tissue distribution, expressed in vulval, pharyngeal and anal muscles.

It localises to the membrane. Proton-dependent uptake of di- or tripeptides, and to a minor extent tetrapeptides. Transport is independent of sodium and chloride ions. Protein shows high affinity to peptide substrates. This chain is Peptide transporter family 2 (pept-2), found in Caenorhabditis elegans.